An 89-amino-acid polypeptide reads, in one-letter code: Small ribosomal subunit protein uS15 (89 aa).

Over residues 1 to 21 the composition is skewed to basic and acidic residues; sequence MAITQERKNQLISEFKTHESD. A disordered region spans residues 1–23; it reads MAITQERKNQLISEFKTHESDTG.

Belongs to the universal ribosomal protein uS15 family. Part of the 30S ribosomal subunit. Forms a bridge to the 50S subunit in the 70S ribosome, contacting the 23S rRNA.

One of the primary rRNA binding proteins, it binds directly to 16S rRNA where it helps nucleate assembly of the platform of the 30S subunit by binding and bridging several RNA helices of the 16S rRNA. Its function is as follows. Forms an intersubunit bridge (bridge B4) with the 23S rRNA of the 50S subunit in the ribosome. The protein is Small ribosomal subunit protein uS15 of Bacillus velezensis (strain DSM 23117 / BGSC 10A6 / LMG 26770 / FZB42) (Bacillus amyloliquefaciens subsp. plantarum).